The following is an 858-amino-acid chain: Putative glutamate--cysteine ligase 2-3 (858 aa).

The interval 1 to 372 (MSDARNVAVG…RDVPPAGASL (372 aa)) is carboxylate-amine ligase. The unknown stretch occupies residues 373–858 (GVAPAVSAPD…GSKDTWIPRR (486 aa)).

In the N-terminal section; belongs to the glutamate--cysteine ligase type 2 family. YbdK subfamily.

It carries out the reaction L-cysteine + L-glutamate + ATP = gamma-L-glutamyl-L-cysteine + ADP + phosphate + H(+). Its function is as follows. ATP-dependent carboxylate-amine ligase which exhibits weak glutamate--cysteine ligase activity. This Frankia alni (strain DSM 45986 / CECT 9034 / ACN14a) protein is Putative glutamate--cysteine ligase 2-3.